The chain runs to 318 residues: COP9 signalosome complex subunit 6 (318 aa).

The region spanning 32-165 (VALHPLVILN…VSVYESVIDI (134 aa)) is the MPN domain.

The protein belongs to the peptidase M67A family. CSN6 subfamily. Component of the CSN complex, probably composed of cops1, cops2, cops3, cops4, cops5, cops6, cops7, cops8 and cops9.

The protein resides in the cytoplasm. The protein localises to the nucleus. Component of the COP9 signalosome complex (CSN), a complex involved in various cellular and developmental processes. The CSN complex is an essential regulator of the ubiquitin (Ubl) conjugation pathway by mediating the deneddylation of the cullin subunits of E3 ligase complexes, leading to modify the Ubl ligase activity. The chain is COP9 signalosome complex subunit 6 (cops6) from Xenopus laevis (African clawed frog).